The sequence spans 346 residues: NADH-quinone oxidoreductase subunit H (346 aa).

A run of 8 helical transmembrane segments spans residues 6-26 (ILFWLLKSGLFFFILITACAY), 76-96 (VMYLIAPAISMTCAIMAWSVV), 128-148 (ILFLFAISSLAVYGIIIAGWA), 166-186 (ISYELPLGMSVVSIVILSGSL), 198-218 (LWNIFKLPGFIAFCLFVVAMF), 260-280 (ITMSCVVTLLFFGGYQVPFGI), 289-309 (LFGLVFFLGKVLFFTFLFLWV), and 324-344 (LGWKKLIPWAILNILIASIYI).

This sequence belongs to the complex I subunit 1 family. As to quaternary structure, NDH-1 is composed of 14 different subunits. Subunits NuoA, H, J, K, L, M, N constitute the membrane sector of the complex.

It localises to the cell inner membrane. It catalyses the reaction a quinone + NADH + 5 H(+)(in) = a quinol + NAD(+) + 4 H(+)(out). In terms of biological role, NDH-1 shuttles electrons from NADH, via FMN and iron-sulfur (Fe-S) centers, to quinones in the respiratory chain. The immediate electron acceptor for the enzyme in this species is believed to be ubiquinone. Couples the redox reaction to proton translocation (for every two electrons transferred, four hydrogen ions are translocated across the cytoplasmic membrane), and thus conserves the redox energy in a proton gradient. This subunit may bind ubiquinone. The polypeptide is NADH-quinone oxidoreductase subunit H (Leptospira interrogans serogroup Icterohaemorrhagiae serovar copenhageni (strain Fiocruz L1-130)).